The chain runs to 154 residues: Endoribonuclease YbeY (154 aa).

Positions 113, 117, and 123 each coordinate Zn(2+).

The protein belongs to the endoribonuclease YbeY family. The cofactor is Zn(2+).

It is found in the cytoplasm. Its function is as follows. Single strand-specific metallo-endoribonuclease involved in late-stage 70S ribosome quality control and in maturation of the 3' terminus of the 16S rRNA. The sequence is that of Endoribonuclease YbeY from Vibrio cholerae serotype O1 (strain ATCC 39315 / El Tor Inaba N16961).